The sequence spans 169 residues: Putative pre-16S rRNA nuclease (169 aa).

Residues Met-1 to Arg-19 show a composition bias toward basic and acidic residues. The disordered stretch occupies residues Met-1–Gly-24.

It belongs to the YqgF nuclease family.

The protein resides in the cytoplasm. Its function is as follows. Could be a nuclease involved in processing of the 5'-end of pre-16S rRNA. This chain is Putative pre-16S rRNA nuclease, found in Mycobacterium sp. (strain KMS).